We begin with the raw amino-acid sequence, 491 residues long: Cobyric acid synthase (491 aa).

The region spanning 250 to 439 (ELNIIVIRLP…LHGIFDNGSW (190 aa)) is the GATase cobBQ-type domain. Cys331 serves as the catalytic Nucleophile. His431 is a catalytic residue.

This sequence belongs to the CobB/CobQ family. CobQ subfamily.

It functions in the pathway cofactor biosynthesis; adenosylcobalamin biosynthesis. Catalyzes amidations at positions B, D, E, and G on adenosylcobyrinic A,C-diamide. NH(2) groups are provided by glutamine, and one molecule of ATP is hydrogenolyzed for each amidation. The chain is Cobyric acid synthase from Microcystis aeruginosa (strain NIES-843 / IAM M-2473).